A 430-amino-acid chain; its full sequence is Agropine synthesis reductase (430 aa).

Leucine 203 to serine 227 provides a ligand contact to NAD(+). A substrate-binding site is contributed by serine 333. Tyrosine 346 acts as the Proton acceptor in catalysis.

Belongs to the short-chain dehydrogenases/reductases (SDR) family.

It participates in opine metabolism; mannopine biosynthesis. Functionally, reduces deoxy-fructosyl-glutamine to mannopine. The protein is Agropine synthesis reductase (mas1) of Rhizobium rhizogenes (Agrobacterium rhizogenes).